The primary structure comprises 173 residues: Small ribosomal subunit protein uS5 (173 aa).

Residues 17–80 (WQERVIQIRR…SDAKKHVVDV (64 aa)) form the S5 DRBM domain.

The protein belongs to the universal ribosomal protein uS5 family. Part of the 30S ribosomal subunit. Contacts proteins S4 and S8.

Functionally, with S4 and S12 plays an important role in translational accuracy. Located at the back of the 30S subunit body where it stabilizes the conformation of the head with respect to the body. The polypeptide is Small ribosomal subunit protein uS5 (Picosynechococcus sp. (strain ATCC 27264 / PCC 7002 / PR-6) (Agmenellum quadruplicatum)).